The chain runs to 158 residues: Large ribosomal subunit protein uL16 (158 aa).

Positions 1–22 are disordered; sequence MLSPKRTKYRKQQRGRMKGKAT.

The protein belongs to the universal ribosomal protein uL16 family. In terms of assembly, part of the 50S ribosomal subunit.

Functionally, binds 23S rRNA and is also seen to make contacts with the A and possibly P site tRNAs. The protein is Large ribosomal subunit protein uL16 of Synechococcus sp. (strain JA-3-3Ab) (Cyanobacteria bacterium Yellowstone A-Prime).